The primary structure comprises 319 residues: Glutathione synthetase (319 aa).

The ATP-grasp domain maps to 125-311; sequence EKLFATLFPQ…IGGLLMDAIE (187 aa). 151–208 contributes to the ATP binding site; sequence FAEQQGDVILKPLDGMGGASIFRHRAGDPNLSVILETLTAHGTQQIMAQGYLPAIKDG. Positions 282 and 284 each coordinate Mg(2+).

This sequence belongs to the prokaryotic GSH synthase family. Requires Mg(2+) as cofactor. It depends on Mn(2+) as a cofactor.

It catalyses the reaction gamma-L-glutamyl-L-cysteine + glycine + ATP = glutathione + ADP + phosphate + H(+). Its pathway is sulfur metabolism; glutathione biosynthesis; glutathione from L-cysteine and L-glutamate: step 2/2. This is Glutathione synthetase from Pseudomonas syringae pv. tomato (strain ATCC BAA-871 / DC3000).